A 396-amino-acid chain; its full sequence is Lipid-A-disaccharide synthase (396 aa).

This sequence belongs to the LpxB family.

The catalysed reaction is a lipid X + a UDP-2-N,3-O-bis[(3R)-3-hydroxyacyl]-alpha-D-glucosamine = a lipid A disaccharide + UDP + H(+). It functions in the pathway bacterial outer membrane biogenesis; LPS lipid A biosynthesis. Its function is as follows. Condensation of UDP-2,3-diacylglucosamine and 2,3-diacylglucosamine-1-phosphate to form lipid A disaccharide, a precursor of lipid A, a phosphorylated glycolipid that anchors the lipopolysaccharide to the outer membrane of the cell. The protein is Lipid-A-disaccharide synthase of Nitrobacter winogradskyi (strain ATCC 25391 / DSM 10237 / CIP 104748 / NCIMB 11846 / Nb-255).